The following is a 160-amino-acid chain: Large ribosomal subunit protein eL29 (160 aa).

Residues 1 to 26 are compositionally biased toward basic residues; sequence MAKSKNHTTHNQSRKWHRNGIKKPRS. Disordered stretches follow at residues 1-34 and 115-160; these read MAKS…SLKG and RLCQ…VKAP. An N6-methyllysine modification is found at K5. S31 carries the post-translational modification Phosphoserine. N6-acetyllysine is present on K33. Residues 126–160 are compositionally biased toward low complexity; sequence KAGAKAPAKAQASAPAQAPKGAQAPKGAQAPVKAP. A run of 2 repeats spans residues 127 to 134 and 135 to 142. Positions 127-142 are 2 X 8 AA tandem repeats of A-X-A-K-A-P-A-[KQ]; that stretch reads AGAKAPAKAQASAPAQ. S138 bears the Phosphoserine mark. At K145 the chain carries N6-acetyllysine.

The protein belongs to the eukaryotic ribosomal protein eL29 family. As to quaternary structure, component of the large ribosomal subunit.

It is found in the cytoplasm. Component of the large ribosomal subunit. The ribosome is a large ribonucleoprotein complex responsible for the synthesis of proteins in the cell. The polypeptide is Large ribosomal subunit protein eL29 (Rpl29) (Mus musculus (Mouse)).